Reading from the N-terminus, the 320-residue chain is 4-hydroxy-3-methylbut-2-enyl diphosphate reductase (320 aa).

Cys-12 lines the [4Fe-4S] cluster pocket. (2E)-4-hydroxy-3-methylbut-2-enyl diphosphate is bound by residues His-41 and His-74. 2 residues coordinate dimethylallyl diphosphate: His-41 and His-74. Isopentenyl diphosphate is bound by residues His-41 and His-74. Cys-96 contributes to the [4Fe-4S] cluster binding site. His-124 is a binding site for (2E)-4-hydroxy-3-methylbut-2-enyl diphosphate. Residue His-124 participates in dimethylallyl diphosphate binding. An isopentenyl diphosphate-binding site is contributed by His-124. Glu-126 functions as the Proton donor in the catalytic mechanism. A (2E)-4-hydroxy-3-methylbut-2-enyl diphosphate-binding site is contributed by Thr-167. Cys-197 lines the [4Fe-4S] cluster pocket. (2E)-4-hydroxy-3-methylbut-2-enyl diphosphate contacts are provided by Ser-225, Ser-226, Asn-227, and Ser-269. Dimethylallyl diphosphate contacts are provided by Ser-225, Ser-226, Asn-227, and Ser-269. Isopentenyl diphosphate-binding residues include Ser-225, Ser-226, Asn-227, and Ser-269.

Belongs to the IspH family. It depends on [4Fe-4S] cluster as a cofactor.

It catalyses the reaction isopentenyl diphosphate + 2 oxidized [2Fe-2S]-[ferredoxin] + H2O = (2E)-4-hydroxy-3-methylbut-2-enyl diphosphate + 2 reduced [2Fe-2S]-[ferredoxin] + 2 H(+). The catalysed reaction is dimethylallyl diphosphate + 2 oxidized [2Fe-2S]-[ferredoxin] + H2O = (2E)-4-hydroxy-3-methylbut-2-enyl diphosphate + 2 reduced [2Fe-2S]-[ferredoxin] + 2 H(+). It functions in the pathway isoprenoid biosynthesis; dimethylallyl diphosphate biosynthesis; dimethylallyl diphosphate from (2E)-4-hydroxy-3-methylbutenyl diphosphate: step 1/1. Its pathway is isoprenoid biosynthesis; isopentenyl diphosphate biosynthesis via DXP pathway; isopentenyl diphosphate from 1-deoxy-D-xylulose 5-phosphate: step 6/6. Its function is as follows. Catalyzes the conversion of 1-hydroxy-2-methyl-2-(E)-butenyl 4-diphosphate (HMBPP) into a mixture of isopentenyl diphosphate (IPP) and dimethylallyl diphosphate (DMAPP). Acts in the terminal step of the DOXP/MEP pathway for isoprenoid precursor biosynthesis. In Francisella tularensis subsp. novicida (strain U112), this protein is 4-hydroxy-3-methylbut-2-enyl diphosphate reductase.